The chain runs to 467 residues: Light-independent protochlorophyllide reductase subunit N (467 aa).

[4Fe-4S] cluster contacts are provided by C22, C47, and C107.

Belongs to the BchN/ChlN family. In terms of assembly, protochlorophyllide reductase is composed of three subunits; ChlL, ChlN and ChlB. Forms a heterotetramer of two ChlB and two ChlN subunits. It depends on [4Fe-4S] cluster as a cofactor.

It localises to the plastid. The protein localises to the chloroplast. It catalyses the reaction chlorophyllide a + oxidized 2[4Fe-4S]-[ferredoxin] + 2 ADP + 2 phosphate = protochlorophyllide a + reduced 2[4Fe-4S]-[ferredoxin] + 2 ATP + 2 H2O. The protein operates within porphyrin-containing compound metabolism; chlorophyll biosynthesis (light-independent). Its function is as follows. Component of the dark-operative protochlorophyllide reductase (DPOR) that uses Mg-ATP and reduced ferredoxin to reduce ring D of protochlorophyllide (Pchlide) to form chlorophyllide a (Chlide). This reaction is light-independent. The NB-protein (ChlN-ChlB) is the catalytic component of the complex. This Pinus thunbergii (Japanese black pine) protein is Light-independent protochlorophyllide reductase subunit N.